The following is a 219-amino-acid chain: EP300-interacting inhibitor of differentiation 2 (219 aa).

The interval 1–71 (MSELPADQGV…PVPEAREGPM (71 aa)) is disordered. Residues 20–34 (GDVRQAEVGGRRREP) are compositionally biased toward basic and acidic residues. An Omega-N-methylarginine modification is found at Arg-75. The interval 95–115 (AEPAEEEGPEGRPRSRPGNGP) is disordered.

In terms of assembly, heterodimer with EID2B. Interacts with the C-terminus of EP300. Interacts with HDAC1 and HDAC2. Interacts with SMAD2, SMAD4 and with the MH2 domain of SMAD3.

It is found in the nucleus. Functionally, interacts with EP300 and acts as a repressor of MYOD-dependent transcription and muscle differentiation. Inhibits EP300 histone acetyltransferase activity. Acts as a repressor of TGFB/SMAD transcriptional responses. May act as a repressor of the TGFB/SMAD3-dependent signaling by selectively blocking formation of TGFB-induced SMAD3-SMAD4 complex. This Bos taurus (Bovine) protein is EP300-interacting inhibitor of differentiation 2.